Reading from the N-terminus, the 511-residue chain is Bifunctional purine biosynthesis protein PurH (511 aa).

The MGS-like domain maps to 1 to 145 (MKQRALVSVS…KNHKFVSVIV (145 aa)).

The protein belongs to the PurH family.

The catalysed reaction is (6R)-10-formyltetrahydrofolate + 5-amino-1-(5-phospho-beta-D-ribosyl)imidazole-4-carboxamide = 5-formamido-1-(5-phospho-D-ribosyl)imidazole-4-carboxamide + (6S)-5,6,7,8-tetrahydrofolate. The enzyme catalyses IMP + H2O = 5-formamido-1-(5-phospho-D-ribosyl)imidazole-4-carboxamide. The protein operates within purine metabolism; IMP biosynthesis via de novo pathway; 5-formamido-1-(5-phospho-D-ribosyl)imidazole-4-carboxamide from 5-amino-1-(5-phospho-D-ribosyl)imidazole-4-carboxamide (10-formyl THF route): step 1/1. Its pathway is purine metabolism; IMP biosynthesis via de novo pathway; IMP from 5-formamido-1-(5-phospho-D-ribosyl)imidazole-4-carboxamide: step 1/1. The polypeptide is Bifunctional purine biosynthesis protein PurH (Bacillus cereus (strain AH187)).